Consider the following 860-residue polypeptide: Protein argonaute-2 (860 aa).

A disordered region spans residues 1 to 30; that stretch reads MYSGAGPALAPPAPPPPPIQGYAFKPPPRP. Tyr-2 carries the 3'-nitrotyrosine modification. Residues 9 to 30 are compositionally biased toward pro residues; it reads LAPPAPPPPPIQGYAFKPPPRP. The PAZ domain occupies 230–349; it reads PVIEFVCEVL…LPLEVCNIVA (120 aa). Positions 312-317 are interaction with guide RNA; the sequence is YFKDRH. The residue at position 388 (Ser-388) is a Phosphoserine. The 302-residue stretch at 518–819 folds into the Piwi domain; that stretch reads LVVVILPGKT…VAFRARYHLV (302 aa). Positions 525–567 are interaction with guide RNA; sequence GKTPVYAEVKRVGDTVLGMATQCVQMKNVQRTTPQTLSNLWLK. Positions 588–591 are interaction with GW182 family members; sequence FQQP. Asp-598 is a binding site for a divalent metal cation. Residues 651-661 are interaction with GW182 family members; sequence LIQFYKSTRFK. A divalent metal cation is bound at residue Asp-670. Pro-701 carries the 4-hydroxyproline modification. 3 interaction with guide RNA regions span residues 710 to 711, 754 to 762, and 791 to 813; these read KR, HAGIQGTSR, and YVRC…VAFR. Position 808 (His-808) interacts with a divalent metal cation. 4 positions are modified to phosphoserine: Ser-825, Ser-829, Ser-832, and Ser-835.

This sequence belongs to the argonaute family. Ago subfamily. As to quaternary structure, interacts with DICER1 through its Piwi domain and with TARBP2 during assembly of the RNA-induced silencing complex (RISC). Together, DICER1, AGO2 and TARBP2 constitute the trimeric RISC loading complex (RLC), or micro-RNA (miRNA) loading complex (miRLC). Within the RLC/miRLC, DICER1 and TARBP2 are required to process precursor miRNAs (pre-miRNAs) to mature miRNAs and then load them onto AGO2. AGO2 bound to the mature miRNA constitutes the minimal RISC and may subsequently dissociate from DICER1 and TARBP2. Note however that the term RISC has also been used to describe the trimeric RLC/miRLC. The formation of RISC complexes containing siRNAs rather than miRNAs appears to occur independently of DICER1. Interacts with AGO1. Also interacts with DDB1, DDX5, DDX6, DDX20, DHX30, DHX36, DDX47, DHX9, ELAVL, FXR1, GEMIN4, HNRNPF, IGF2BP1, ILF3, IMP8, MATR3, PABPC1, PRMT5, P4HA1, P4HB, RBM4, SART3, TNRC6A, TNRC6B, UPF1 and YBX1. Interacts with the P-body components DCP1A and XRN1. Associates with polysomes and messenger ribonucleoproteins (mNRPs). Interacts with RBM4; the interaction is modulated under stress-induced conditions, occurs under both cell proliferation and differentiation conditions and in an RNA- and phosphorylation-independent manner. Interacts with LIMD1, WTIP and AJUBA. Interacts with TRIM71; the interaction increases in presence of RNA. Interacts with APOBEC3G in an RNA-dependent manner. Interacts with APOBEC3A, APOBEC3C, APOBEC3F and APOBEC3H. Interacts with DICER1, TARBP2, EIF6, MOV10 and RPL7A (60S ribosome subunit); they form a large RNA-induced silencing complex (RISC). Interacts with FMR1. Interacts with ZFP36. Interacts with RC3H1; the interaction is RNA independent. Found in a complex composed of AGO2, CHD7 and ARB2A. Interacts with SND1 and SYT11. Interacts with CLNK. Interacts with GARRE1. Interacts with GRB2; this interaction is important for the formation of a ternary complex containing GRB2, AGO2 and DICER1. Mg(2+) serves as cofactor. The cofactor is Mn(2+). Post-translationally, hydroxylated. 4-hydroxylation appears to enhance protein stability but is not required for miRNA-binding or endonuclease activity. Ubiquitinated on surface-exposed lysines by a SCF-like E3 ubiquitin-protein ligase complex containing ZSWIM8 during target-directed microRNA degradation (TDMD), a process that mediates degradation of microRNAs (miRNAs). Ubiquitination by the SCF-like E3 ubiquitin-protein ligase complex containing ZSWIM8 leads to its subsequent degradation, thereby exposing miRNAs for degradation. ZSWIM8 recognizes and binds AGO2 when it is engaged with a TDMD target. In terms of processing, phosphorylation at Ser-388 by AKT3; leads to up-regulate translational repression of microRNA target and down-regulate endonucleolytic cleavage. Post-translationally, a phosphorylation cycle of C-terminal serine cluster (Ser-825-Ser-835) regulates the release of target mRNAs. Target-binding leads to phosphorylation of these residues by CSNK1A1, which reduces the affinity of AGO2 for mRNA and enables target release. The ANKRD52-PPP6C phosphatase complex dephosphorylates the residues, which primes AGO2 for binding a new target.

The protein localises to the cytoplasm. It localises to the P-body. The protein resides in the nucleus. It catalyses the reaction Endonucleolytic cleavage to 5'-phosphomonoester.. Its function is as follows. Required for RNA-mediated gene silencing (RNAi) by the RNA-induced silencing complex (RISC). The 'minimal RISC' appears to include AGO2 bound to a short guide RNA such as a microRNA (miRNA) or short interfering RNA (siRNA). These guide RNAs direct RISC to complementary mRNAs that are targets for RISC-mediated gene silencing. The precise mechanism of gene silencing depends on the degree of complementarity between the miRNA or siRNA and its target. Binding of RISC to a perfectly complementary mRNA generally results in silencing due to endonucleolytic cleavage of the mRNA specifically by AGO2. Binding of RISC to a partially complementary mRNA results in silencing through inhibition of translation, and this is independent of endonuclease activity. May inhibit translation initiation by binding to the 7-methylguanosine cap, thereby preventing the recruitment of the translation initiation factor eIF4-E. May also inhibit translation initiation via interaction with EIF6, which itself binds to the 60S ribosomal subunit and prevents its association with the 40S ribosomal subunit. The inhibition of translational initiation leads to the accumulation of the affected mRNA in cytoplasmic processing bodies (P-bodies), where mRNA degradation may subsequently occur. In some cases RISC-mediated translational repression is also observed for miRNAs that perfectly match the 3' untranslated region (3'-UTR). Can also up-regulate the translation of specific mRNAs under certain growth conditions. Binds to the AU element of the 3'-UTR of the TNF (TNF-alpha) mRNA and up-regulates translation under conditions of serum starvation. Also required for transcriptional gene silencing (TGS), in which short RNAs known as antigene RNAs or agRNAs direct the transcriptional repression of complementary promoter regions. The sequence is that of Protein argonaute-2 (AGO2) from Bos taurus (Bovine).